The following is a 318-amino-acid chain: tRNA-cytidine(32) 2-sulfurtransferase (318 aa).

The short motif at 52-57 is the PP-loop motif element; sequence SGGKDS. 3 residues coordinate [4Fe-4S] cluster: C127, C130, and C218.

It belongs to the TtcA family. In terms of assembly, homodimer. The cofactor is Mg(2+). It depends on [4Fe-4S] cluster as a cofactor.

The protein localises to the cytoplasm. It carries out the reaction cytidine(32) in tRNA + S-sulfanyl-L-cysteinyl-[cysteine desulfurase] + AH2 + ATP = 2-thiocytidine(32) in tRNA + L-cysteinyl-[cysteine desulfurase] + A + AMP + diphosphate + H(+). Its pathway is tRNA modification. Functionally, catalyzes the ATP-dependent 2-thiolation of cytidine in position 32 of tRNA, to form 2-thiocytidine (s(2)C32). The sulfur atoms are provided by the cysteine/cysteine desulfurase (IscS) system. This Actinobacillus pleuropneumoniae serotype 7 (strain AP76) protein is tRNA-cytidine(32) 2-sulfurtransferase.